The chain runs to 581 residues: Prolactin receptor (581 aa).

Residues 1–24 (MKENVASRAVFILLLFLNASLLNG) form the signal peptide. Residues 25-234 (QSPPGKPKII…QIPNDFPVND (210 aa)) are Extracellular-facing. Fibronectin type-III domains lie at 27 to 127 (PPGK…IVEP) and 129 to 229 (PPAN…IPND). Cysteines 36 and 46 form a disulfide. N-linked (GlcNAc...) asparagine glycosylation occurs at Asn-59. Cys-75 and Cys-86 are disulfide-bonded. Residue Asn-132 is glycosylated (N-linked (GlcNAc...) asparagine). The Zn(2+) site is built by Asp-211 and His-212. The WSXWS motif motif lies at 215-219 (WSEWS). Asn-233 carries N-linked (GlcNAc...) asparagine glycosylation. The chain crosses the membrane as a helical span at residues 235 to 258 (TTVWIFVAVLSAVICLIMVWAVAL). Residues 259-581 (KGYSMMTCIL…PAKEAPPALP (323 aa)) lie on the Cytoplasmic side of the membrane. A Box 1 motif motif is present at residues 267-275 (ILPPVPGPK). Disordered regions lie at residues 321-362 (EDQQ…LFSE) and 462-502 (LKPS…QDKT). Over residues 329–349 (PSKEHMEQGVKPMHMDPDSDS) the composition is skewed to basic and acidic residues.

This sequence belongs to the type I cytokine receptor family. Type 1 subfamily. As to quaternary structure, interacts with SMARCA1. Interacts with NEK3 and VAV2 and this interaction is prolactin-dependent.

It localises to the membrane. Functionally, this is a receptor for the anterior pituitary hormone prolactin. This chain is Prolactin receptor (PRLR), found in Cervus elaphus (Red deer).